The following is a 491-amino-acid chain: Cell division control protein 1 (491 aa).

Residues 1 to 33 are disordered; the sequence is MVYRNRSKSVLSTHSKKSDDKAHYKSRSKKKSK. The Cytoplasmic segment spans residues 1–39; sequence MVYRNRSKSVLSTHSKKSDDKAHYKSRSKKKSKSRSKKR. A compositionally biased stretch (basic residues) spans 24–33; it reads YKSRSKKKSK. Residues 40–60 form a helical membrane-spanning segment; it reads LRIYWRYISIVWILWLGLISY. Topologically, residues 61–391 are extracellular; the sequence is YESVVVKRAM…LCYMPDPYKA (331 aa). A divalent metal cation-binding residues include aspartate 95, aspartate 144, asparagine 183, and histidine 323. A helical membrane pass occupies residues 392 to 412; that stretch reads IRMYLWGLLFSAAFIAYMHFF. At 413–465 the chain is on the cytoplasmic side; sequence PKSFNNRVATIMNRVFTRPDGNTSDLPLPTSISKSKSKKSLTHSKYAVNDTRS. A helical membrane pass occupies residues 466–486; the sequence is IKQFLVNAIVLFVSVMPIFIY. Topologically, residues 487–491 are extracellular; sequence FYTVV.

This sequence belongs to the metallophosphoesterase superfamily. MPPE1 family. A divalent metal cation is required as a cofactor.

It localises to the membrane. In terms of biological role, probable metallophosphoesterase which may participate in recombinational repair of double -strand breaks. This Saccharomyces cerevisiae (strain ATCC 204508 / S288c) (Baker's yeast) protein is Cell division control protein 1 (CDC1).